The following is a 148-amino-acid chain: Cyanate hydratase (148 aa).

Residues arginine 89, glutamate 92, and serine 115 contribute to the active site.

The protein belongs to the cyanase family.

It carries out the reaction cyanate + hydrogencarbonate + 3 H(+) = NH4(+) + 2 CO2. In terms of biological role, catalyzes the reaction of cyanate with bicarbonate to produce ammonia and carbon dioxide. The protein is Cyanate hydratase of Sulfurisphaera tokodaii (strain DSM 16993 / JCM 10545 / NBRC 100140 / 7) (Sulfolobus tokodaii).